Reading from the N-terminus, the 353-residue chain is UDP-N-acetylglucosamine--N-acetylmuramyl-(pentapeptide) pyrophosphoryl-undecaprenol N-acetylglucosamine transferase (353 aa).

UDP-N-acetyl-alpha-D-glucosamine is bound by residues 10-12 (TGG), asparagine 124, serine 183, and glutamine 283.

It belongs to the glycosyltransferase 28 family. MurG subfamily.

It is found in the cell inner membrane. The enzyme catalyses di-trans,octa-cis-undecaprenyl diphospho-N-acetyl-alpha-D-muramoyl-L-alanyl-D-glutamyl-meso-2,6-diaminopimeloyl-D-alanyl-D-alanine + UDP-N-acetyl-alpha-D-glucosamine = di-trans,octa-cis-undecaprenyl diphospho-[N-acetyl-alpha-D-glucosaminyl-(1-&gt;4)]-N-acetyl-alpha-D-muramoyl-L-alanyl-D-glutamyl-meso-2,6-diaminopimeloyl-D-alanyl-D-alanine + UDP + H(+). Its pathway is cell wall biogenesis; peptidoglycan biosynthesis. In terms of biological role, cell wall formation. Catalyzes the transfer of a GlcNAc subunit on undecaprenyl-pyrophosphoryl-MurNAc-pentapeptide (lipid intermediate I) to form undecaprenyl-pyrophosphoryl-MurNAc-(pentapeptide)GlcNAc (lipid intermediate II). The chain is UDP-N-acetylglucosamine--N-acetylmuramyl-(pentapeptide) pyrophosphoryl-undecaprenol N-acetylglucosamine transferase from Helicobacter pylori (strain ATCC 700392 / 26695) (Campylobacter pylori).